Here is a 237-residue protein sequence, read N- to C-terminus: DCN1-like protein 5 (237 aa).

Position 41 is a phosphoserine (serine 41). Residues 46-232 (FSRKKCLAWF…LLDEFVEWQK (187 aa)) form the DCUN1 domain.

In terms of assembly, part of a complex that contains DCUN1D5, CUL1 and RBX1; this interaction is bridged by CUL1. Interacts (via the DCUN1 domain) with the unneddylated cullins: interacts with CUL1, CUL2, CUL3, CUL4A, CUL4B and CUL5; these interactions promote the cullin neddylation and the identity of the cullin dictates the affinity of the interaction. Interacts (via DCUN1 domain) with UBE2M (N-terminally acetylated form) and probably with UBE2F (N-terminally acetylated form). May also interact with regulators or subunits of cullin-RING ligases such as RBX1, RNF7, ELOB and DDB1; these interactions are bridged by cullins. Interacts with CAND1; this interaction is bridged by cullins and strongly inhibits the neddylation of cullins. These CAND-cullin-DCNL complexes can only be neddylated in the presence of a substrate adapter. In terms of processing, phosphorylation at Ser-41 is independent of cullin's interaction. Phosphorylated in response to both TICAM1 and MYD88 dependent Toll-like receptor (TLR) pathway activation. Phosphorylated in response to IL1B stimulation.

It localises to the nucleus. Its subcellular location is the cytoplasm. It is found in the cytoskeleton. The protein localises to the spindle. Functionally, contributes to the neddylation of all cullins by transferring NEDD8 from N-terminally acetylated NEDD8-conjugating E2s enzyme to different cullin C-terminal domain-RBX complexes which is necessary for the activation of cullin-RING E3 ubiquitin ligases (CRLs). May play a role in DNA damage response and may participate in cell proliferation and anchorage-independent cell growth. The protein is DCN1-like protein 5 of Rattus norvegicus (Rat).